The following is a 566-amino-acid chain: Tetratricopeptide repeat protein 34 (566 aa).

The segment at 1–29 (MLQRSPRAGPSRAQGRREAAETGGPTTQE) is disordered. TPR repeat units lie at residues 50-83 (EASR…RPQA), 178-211 (SESL…EPGN), 212-245 (VQAL…GPGT), 306-339 (PHWH…APTS), 341-373 (AARA…DAPD), 424-457 (ACHL…ALGD), 464-497 (AEDF…APSL), and 512-545 (ARMF…DPDH).

The polypeptide is Tetratricopeptide repeat protein 34 (TTC34) (Homo sapiens (Human)).